A 34-amino-acid chain; its full sequence is Phalloidin proprotein (34 aa).

Positions 1 to 10 (MSDINASRLP) are excised as a propeptide. A cross-link (cyclopeptide (Ala-Pro)) is located at residues 11–17 (AWLATCP). Residues 12–16 (WLATC) constitute a cross-link (2'-cysteinyl-6'-hydroxytryptophan sulfoxide (Trp-Cys)). The propeptide occupies 18–34 (CVGDDVNPTLSRGESLC).

Belongs to the MSDIN fungal toxin family. Processed by the macrocyclase-peptidase enzyme POPB to yield a toxic cyclic heptapeptide. POPB first removes 10 residues from the N-terminus. Conformational trapping of the remaining peptide forces the enzyme to release this intermediate rather than proceed to macrocyclization. The enzyme rebinds the remaining peptide in a different conformation and catalyzes macrocyclization of the N-terminal 7 residues.

Toxin that belongs to the bicyclic heptapeptides called phallotoxins. Although structurally related to amatoxins, phallotoxins have a different mode of action, which is the stabilization of F-actin. Phallotoxins are poisonous when administered parenterally, but not orally because of poor absorption. The polypeptide is Phalloidin proprotein (Amanita phalloides (Death cap)).